A 443-amino-acid chain; its full sequence is UPF0656 protein C926.02 (443 aa).

It belongs to the UPF0656 family.

It is found in the cytoplasm. The protein localises to the nucleus. This chain is UPF0656 protein C926.02, found in Schizosaccharomyces pombe (strain 972 / ATCC 24843) (Fission yeast).